The following is a 414-amino-acid chain: STAGA complex 65 subunit gamma (414 aa).

The interval 87–108 is disordered; sequence NQQQTEGVKTEESEPLPSCPGS. Ser-108 carries the post-translational modification Phosphoserine. Lys-271 participates in a covalent cross-link: Glycyl lysine isopeptide (Lys-Gly) (interchain with G-Cter in SUMO2). 2 positions are modified to phosphoserine: Ser-323 and Ser-334. A disordered region spans residues 346-414; that stretch reads PQESEEGNVS…QRCKKRMRKI (69 aa). Residues 386-395 are compositionally biased toward low complexity; the sequence is SSYGSHSTDS.

In terms of assembly, component of the STAGA transcription coactivator-HAT complex, at least composed of SUPT3H, SUPT7L, GCN5L2, TAF5L, TAF6L, TADA3L, TAD1L, TAF10, TAF12 and TAF9. Sumoylated. Expressed at high levels in adenocarcinomas and gliomas and low in esophageal cancers and malignant hematological disease. Also expressed at high level in the thymus, low in peripheral blood mononuclear cells, and lowest in the stomach, small intestine, and skeletal muscle.

The protein localises to the nucleus. This Homo sapiens (Human) protein is STAGA complex 65 subunit gamma (SUPT7L).